The primary structure comprises 215 residues: Pyrrolidone-carboxylate peptidase (215 aa).

Residues glutamate 81, cysteine 144, and histidine 168 contribute to the active site.

Belongs to the peptidase C15 family. Homotetramer.

It is found in the cytoplasm. The enzyme catalyses Release of an N-terminal pyroglutamyl group from a polypeptide, the second amino acid generally not being Pro.. In terms of biological role, removes 5-oxoproline from various penultimate amino acid residues except L-proline. The polypeptide is Pyrrolidone-carboxylate peptidase (Bacillus licheniformis (strain ATCC 14580 / DSM 13 / JCM 2505 / CCUG 7422 / NBRC 12200 / NCIMB 9375 / NCTC 10341 / NRRL NRS-1264 / Gibson 46)).